We begin with the raw amino-acid sequence, 436 residues long: Serine--tRNA ligase (436 aa).

239–241 is an L-serine binding site; it reads TAE. 270-272 serves as a coordination point for ATP; it reads RKE. Glutamate 293 provides a ligand contact to L-serine. Residue 357–360 participates in ATP binding; sequence EISS. Serine 392 contributes to the L-serine binding site.

It belongs to the class-II aminoacyl-tRNA synthetase family. Type-1 seryl-tRNA synthetase subfamily. Homodimer. The tRNA molecule binds across the dimer.

The protein resides in the cytoplasm. The enzyme catalyses tRNA(Ser) + L-serine + ATP = L-seryl-tRNA(Ser) + AMP + diphosphate + H(+). It catalyses the reaction tRNA(Sec) + L-serine + ATP = L-seryl-tRNA(Sec) + AMP + diphosphate + H(+). It participates in aminoacyl-tRNA biosynthesis; selenocysteinyl-tRNA(Sec) biosynthesis; L-seryl-tRNA(Sec) from L-serine and tRNA(Sec): step 1/1. Its function is as follows. Catalyzes the attachment of serine to tRNA(Ser). Is also able to aminoacylate tRNA(Sec) with serine, to form the misacylated tRNA L-seryl-tRNA(Sec), which will be further converted into selenocysteinyl-tRNA(Sec). The chain is Serine--tRNA ligase from Leuconostoc citreum (strain KM20).